The following is a 284-amino-acid chain: MKIIETVSEMQHFSESLRIAEKRLGVVPTMGALHDGHLSLVKLALKHADVAIMTIFVNPLQFGPSEDFAKYPRTFERDAMLAEKAGVSCIFAPTPETLYPSGFQTHVTVDEITQGFEGELRPGHFRGVTTVVAKLFNITKPHVAVFGEKDAQQLAAIRKMQKDLNFDVEIVPAPIVRETDGLAKSSRNIYLNPAERKQAVVLNESLEIAKSAIQHGERNVKTLLEVLNRHIQSAPLAEPDYIAIVDAESFQPVQEELLAEETYLVLLTVRFGSTRLLDNCRIEL.

An ATP-binding site is contributed by 30-37 (MGALHDGH). H37 acts as the Proton donor in catalysis. Q61 contacts (R)-pantoate. Q61 contacts beta-alanine. ATP is bound at residue 147–150 (GEKD). Q153 contacts (R)-pantoate. Residues V176 and 184-187 (KSSR) each bind ATP.

Belongs to the pantothenate synthetase family. Homodimer.

The protein resides in the cytoplasm. The enzyme catalyses (R)-pantoate + beta-alanine + ATP = (R)-pantothenate + AMP + diphosphate + H(+). It functions in the pathway cofactor biosynthesis; (R)-pantothenate biosynthesis; (R)-pantothenate from (R)-pantoate and beta-alanine: step 1/1. Its function is as follows. Catalyzes the condensation of pantoate with beta-alanine in an ATP-dependent reaction via a pantoyl-adenylate intermediate. The polypeptide is Pantothenate synthetase (Chloroherpeton thalassium (strain ATCC 35110 / GB-78)).